Here is a 197-residue protein sequence, read N- to C-terminus: Large ribosomal subunit protein bL25 (197 aa).

Belongs to the bacterial ribosomal protein bL25 family. CTC subfamily. Part of the 50S ribosomal subunit; part of the 5S rRNA/L5/L18/L25 subcomplex. Contacts the 5S rRNA. Binds to the 5S rRNA independently of L5 and L18.

This is one of the proteins that binds to the 5S RNA in the ribosome where it forms part of the central protuberance. The sequence is that of Large ribosomal subunit protein bL25 from Hydrogenobaculum sp. (strain Y04AAS1).